The sequence spans 169 residues: Crossover junction endodeoxyribonuclease RuvC (169 aa).

Active-site residues include D11, E71, and D143. Mg(2+)-binding residues include D11, E71, and D143.

This sequence belongs to the RuvC family. As to quaternary structure, homodimer which binds Holliday junction (HJ) DNA. The HJ becomes 2-fold symmetrical on binding to RuvC with unstacked arms; it has a different conformation from HJ DNA in complex with RuvA. In the full resolvosome a probable DNA-RuvA(4)-RuvB(12)-RuvC(2) complex forms which resolves the HJ. The cofactor is Mg(2+).

It is found in the cytoplasm. It catalyses the reaction Endonucleolytic cleavage at a junction such as a reciprocal single-stranded crossover between two homologous DNA duplexes (Holliday junction).. The RuvA-RuvB-RuvC complex processes Holliday junction (HJ) DNA during genetic recombination and DNA repair. Endonuclease that resolves HJ intermediates. Cleaves cruciform DNA by making single-stranded nicks across the HJ at symmetrical positions within the homologous arms, yielding a 5'-phosphate and a 3'-hydroxyl group; requires a central core of homology in the junction. The consensus cleavage sequence is 5'-(A/T)TT(C/G)-3'. Cleavage occurs on the 3'-side of the TT dinucleotide at the point of strand exchange. HJ branch migration catalyzed by RuvA-RuvB allows RuvC to scan DNA until it finds its consensus sequence, where it cleaves and resolves the cruciform DNA. The protein is Crossover junction endodeoxyribonuclease RuvC of Rhizobium leguminosarum bv. trifolii (strain WSM2304).